Consider the following 281-residue polypeptide: TIP41-like protein (281 aa).

Belongs to the TIP41 family.

This chain is TIP41-like protein, found in Caenorhabditis elegans.